Reading from the N-terminus, the 275-residue chain is Autophagy protein 5 (275 aa).

Methionine 1 is modified (N-acetylmethionine). Lysine 130 is covalently cross-linked (Glycyl lysine isopeptide (Lys-Gly) (interchain with G-Cter in ATG12)).

This sequence belongs to the ATG5 family. As to quaternary structure, forms a conjugate with ATG12. Part of the minor complex composed of 4 sets of ATG12-ATG5 and ATG16L1 (400 kDa); this complex interacts with ATG3 leading to disruption of ATG7 interaction and promotion of ATG8-like proteins lipidation. Forms an 800-kDa complex composed of ATG12-ATG5 and ATG16L2. The ATG12-ATG5 conjugate interacts with RAB33A; this interaction is bridged by ATG16L1 and promotes ATG12-ATG5-ATG16L1 complex recruitment to phagophores. Interacts with TECPR1; the interaction is direct and does not take place when ATG16L1 is associated with the ATG5-ATG12 conjugate. Interacts with DHX58/RIG-1, IFIH1/MDA5 and MAVS/IPS-1 in monomeric form as well as in ATG12-ATG5 conjugate form. The interaction with MAVS is further enhanced upon vesicular stomatitis virus (VSV) infection. Interacts with ATG3. Interacts with ATG7 and ATG10. Interacts with FADD. Interacts with Bassoon/BSN; this interaction is important for the regulation of presynaptic autophagy. Interacts with ATG16L2. Post-translationally, conjugated to ATG12; which is essential for autophagy, but is not required for association with isolation membrane. Acetylated by EP300.

The protein resides in the cytoplasm. The protein localises to the preautophagosomal structure membrane. Functionally, involved in autophagic vesicle formation. Conjugation with ATG12, through a ubiquitin-like conjugating system involving ATG7 as an E1-like activating enzyme and ATG10 as an E2-like conjugating enzyme, is essential for its function. The ATG12-ATG5 conjugate acts as an E3-like enzyme which is required for lipidation of ATG8 family proteins and their association to the vesicle membranes. Involved in mitochondrial quality control after oxidative damage, and in subsequent cellular longevity. Plays a critical role in multiple aspects of lymphocyte development and is essential for both B and T lymphocyte survival and proliferation. Required for optimal processing and presentation of antigens for MHC II. Involved in the maintenance of axon morphology and membrane structures, as well as in normal adipocyte differentiation. Promotes primary ciliogenesis through removal of OFD1 from centriolar satellites and degradation of IFT20 via the autophagic pathway. As part of the ATG8 conjugation system with ATG12 and ATG16L1, required for recruitment of LRRK2 to stressed lysosomes and induction of LRRK2 kinase activity in response to lysosomal stress. May play an important role in the apoptotic process, possibly within the modified cytoskeleton. Its expression is a relatively late event in the apoptotic process, occurring downstream of caspase activity. Plays a crucial role in IFN-gamma-induced autophagic cell death by interacting with FADD. The polypeptide is Autophagy protein 5 (Sus scrofa (Pig)).